A 234-amino-acid polypeptide reads, in one-letter code: HTH-type transcriptional regulator ArcR (234 aa).

A nucleoside 3',5'-cyclic phosphate is bound at residue 40–129 (VRHYTKGQVI…MAFLCKANDD (90 aa)). In terms of domain architecture, HTH crp-type spans 155-228 (KFAKDRIIKL…HKNWLVSKHL (74 aa)). A DNA-binding region (H-T-H motif) is located at residues 188–207 (IQLMSDMAGISRETAGHIIH).

It localises to the cytoplasm. Positively regulates the expression of the arcABDCR operon under anaerobic conditions, thus playing an essential role in arginine catabolism. May also control the expression of genes encoding proteins which are involved in anaerobic metabolism. Can bind cyclic AMP. This is HTH-type transcriptional regulator ArcR (arcR) from Staphylococcus aureus (strain Mu50 / ATCC 700699).